We begin with the raw amino-acid sequence, 271 residues long: 4-hydroxy-tetrahydrodipicolinate reductase (271 aa).

Residues 11 to 16 and E37 contribute to the NAD(+) site; that span reads GGSGRM. NADP(+) is bound at residue R38. Residues 101 to 103 and 125 to 128 contribute to the NAD(+) site; these read GTT and APNM. Catalysis depends on H158, which acts as the Proton donor/acceptor. H159 lines the (S)-2,3,4,5-tetrahydrodipicolinate pocket. K162 functions as the Proton donor in the catalytic mechanism. 168–169 contacts (S)-2,3,4,5-tetrahydrodipicolinate; the sequence is GT.

It belongs to the DapB family.

The protein resides in the cytoplasm. It catalyses the reaction (S)-2,3,4,5-tetrahydrodipicolinate + NAD(+) + H2O = (2S,4S)-4-hydroxy-2,3,4,5-tetrahydrodipicolinate + NADH + H(+). It carries out the reaction (S)-2,3,4,5-tetrahydrodipicolinate + NADP(+) + H2O = (2S,4S)-4-hydroxy-2,3,4,5-tetrahydrodipicolinate + NADPH + H(+). It functions in the pathway amino-acid biosynthesis; L-lysine biosynthesis via DAP pathway; (S)-tetrahydrodipicolinate from L-aspartate: step 4/4. Functionally, catalyzes the conversion of 4-hydroxy-tetrahydrodipicolinate (HTPA) to tetrahydrodipicolinate. In Shewanella halifaxensis (strain HAW-EB4), this protein is 4-hydroxy-tetrahydrodipicolinate reductase.